A 247-amino-acid chain; its full sequence is MSSTAPEDVARPLLALPAIEAFDAIVRGRRSVRSYADVQVPRRTVRDVLELAARAPSNSNVQPWHTYVLTGRHKRALTDSVLRYYDTIGRTVREFDYQPGPDGWEEPYKERRESFGEGLYGRALGLSLADVDDREFYHRRNYDFFAAPVGLIVTVARNPRLSALIDAGAYIQTILLSARSRGLSTCAQASFLDFHPAVRECLAIPTHRTIVCGISLGYEDAQHPIASNATTREPVDRHVTFLWDDDD.

FMN is bound at residue 29–33; sequence RRSVR. NADP(+) contacts are provided by Ser-59, Arg-112, Tyr-120, and Leu-126. Position 232 (Arg-232) interacts with FMN.

It belongs to the nitroreductase family. Requires FMN as cofactor.

It carries out the reaction 4-nitrobenzoate + 2 NADPH + 2 H(+) = 4-hydroxylaminobenzoate + 2 NADP(+) + H2O. Nitroreductase involved in the degradation of nitroaromatic compounds. Catalyzes the conversion of 4-nitrobenzoate to 4-hydroxylaminobenzoate. The polypeptide is 4-nitrobenzoate reductase (Nocardioides sp. (strain LMS-CY)).